Here is a 70-residue protein sequence, read N- to C-terminus: Large ribosomal subunit protein bL31 (70 aa).

C16, C18, C37, and C40 together coordinate Zn(2+).

This sequence belongs to the bacterial ribosomal protein bL31 family. Type A subfamily. In terms of assembly, part of the 50S ribosomal subunit. It depends on Zn(2+) as a cofactor.

In terms of biological role, binds the 23S rRNA. This Haemophilus influenzae (strain PittEE) protein is Large ribosomal subunit protein bL31.